A 261-amino-acid polypeptide reads, in one-letter code: Carnitinyl-CoA dehydratase (261 aa).

Glutamate 111 (nucleophile) is an active-site residue. Catalysis depends on glutamate 131, which acts as the Proton acceptor.

Belongs to the enoyl-CoA hydratase/isomerase family.

The enzyme catalyses (R)-carnitinyl-CoA = crotonobetainyl-CoA + H2O. Its pathway is amine and polyamine metabolism; carnitine metabolism. In terms of biological role, catalyzes the reversible dehydration of L-carnitinyl-CoA to crotonobetainyl-CoA. In Salmonella typhi, this protein is Carnitinyl-CoA dehydratase.